We begin with the raw amino-acid sequence, 161 residues long: MSTSPTLVFTSSDGVDITVDRDVAERSLLIKNMLEDLGETGEAIPIPNVNEAVLKKVIEWCTHHKNDPPSTGDDDDSRRKTTDIDEWDQKFMQVDQEMLFEIILAANYLDIKGLLDVGCKTVANMIKGKSPEEIRKTFNIQNDFTPEEEDQIRRENEWAEE.

An interaction with the F-box domain of F-box proteins region spans residues 103–161; it reads ILAANYLDIKGLLDVGCKTVANMIKGKSPEEIRKTFNIQNDFTPEEEDQIRRENEWAEE.

Belongs to the SKP1 family. In terms of assembly, component of the SCF (SKP1-CUL1-F-box protein) E3 ubiquitin ligase complexes.

Its pathway is protein modification; protein ubiquitination. In terms of biological role, essential component of the SCF (SKP1-CUL1-F-box protein) E3 ubiquitin ligase complexes, which mediate the ubiquitination and subsequent proteasomal degradation of target proteins. Controls sulfur metabolite repression, probably by mediating the inactivation or degradation of the metR transcription factor. This is E3 ubiquitin ligase complex SCF subunit sconC (sconC) from Aspergillus terreus (strain NIH 2624 / FGSC A1156).